A 104-amino-acid chain; its full sequence is MLITNIETIPGKNIVKHLGLVQGSTVRSKHVGRDIMAGLKNIFGGELRGYTELLEDARGEALERMKRQARGMGANAVINVRFATSSVAQGAAELFVYGTAVVME.

It belongs to the UPF0145 family.

This Hahella chejuensis (strain KCTC 2396) protein is UPF0145 protein HCH_01985.